The sequence spans 532 residues: NADH-quinone oxidoreductase subunit N 2 (532 aa).

Transmembrane regions (helical) follow at residues 37-57 (VAPP…DLFL), 63-83 (RLLG…LIPL), 107-127 (FTLV…LLSL), 133-153 (LPAG…ALLP), 158-178 (LATL…LVGI), 192-212 (FFLS…FVYA), 241-261 (VALT…HFWV), 276-296 (LSVV…VVAF), 302-322 (VWGP…NVAA), 336-356 (LLAW…AAAA), 367-387 (VAYA…AAVV), 411-431 (LALG…IGLF), 444-464 (GLGW…YYYL), and 504-524 (TAIV…QTVL).

The protein belongs to the complex I subunit 2 family. NDH-1 is composed of 14 different subunits. Subunits NuoA, H, J, K, L, M, N constitute the membrane sector of the complex.

It localises to the cell membrane. It catalyses the reaction a quinone + NADH + 5 H(+)(in) = a quinol + NAD(+) + 4 H(+)(out). NDH-1 shuttles electrons from NADH, via FMN and iron-sulfur (Fe-S) centers, to quinones in the respiratory chain. The immediate electron acceptor for the enzyme in this species is believed to be a menaquinone. Couples the redox reaction to proton translocation (for every two electrons transferred, four hydrogen ions are translocated across the cytoplasmic membrane), and thus conserves the redox energy in a proton gradient. The polypeptide is NADH-quinone oxidoreductase subunit N 2 (Streptomyces griseus subsp. griseus (strain JCM 4626 / CBS 651.72 / NBRC 13350 / KCC S-0626 / ISP 5235)).